We begin with the raw amino-acid sequence, 520 residues long: Cytochrome P450 72A397 (520 aa).

A helical membrane pass occupies residues 14-34 (AVAVAVVVVGWAWKVLNWVWV). Residue Cys468 coordinates heme.

Belongs to the cytochrome P450 family. It depends on heme as a cofactor.

The protein localises to the membrane. It carries out the reaction oleanolate + reduced [NADPH--hemoprotein reductase] + O2 = hederagenin + oxidized [NADPH--hemoprotein reductase] + H2O + H(+). Its function is as follows. Catalyzes the oxidation of oleanolate at the C-23 position to form hederagenin. This Kalopanax septemlobus (Castor aralia) protein is Cytochrome P450 72A397.